The primary structure comprises 68 residues: Large ribosomal subunit protein eL24 (68 aa).

Cysteine 7, cysteine 10, cysteine 33, and cysteine 37 together coordinate Zn(2+). Residues cysteine 7 to cysteine 37 form a C4-type zinc finger.

It belongs to the eukaryotic ribosomal protein eL24 family. Part of the 50S ribosomal subunit. Forms a cluster with proteins L3 and L14. Zn(2+) serves as cofactor.

Its function is as follows. Binds to the 23S rRNA. The polypeptide is Large ribosomal subunit protein eL24 (Methanopyrus kandleri (strain AV19 / DSM 6324 / JCM 9639 / NBRC 100938)).